The primary structure comprises 121 residues: Small ribosomal subunit protein uS13 (121 aa).

The tract at residues 90 to 121 (RHRHGLPVRGQHTKNNARTRKGKAVAIAGKKK) is disordered.

It belongs to the universal ribosomal protein uS13 family. In terms of assembly, part of the 30S ribosomal subunit. Forms a loose heterodimer with protein S19. Forms two bridges to the 50S subunit in the 70S ribosome.

Located at the top of the head of the 30S subunit, it contacts several helices of the 16S rRNA. In the 70S ribosome it contacts the 23S rRNA (bridge B1a) and protein L5 of the 50S subunit (bridge B1b), connecting the 2 subunits; these bridges are implicated in subunit movement. Contacts the tRNAs in the A and P-sites. The chain is Small ribosomal subunit protein uS13 from Limosilactobacillus fermentum (strain NBRC 3956 / LMG 18251) (Lactobacillus fermentum).